The sequence spans 348 residues: Protein pelota homolog (348 aa).

It belongs to the eukaryotic release factor 1 family. Pelota subfamily. As to quaternary structure, monomer. Requires a divalent metal cation as cofactor.

Its subcellular location is the cytoplasm. In terms of biological role, may function in recognizing stalled ribosomes, interact with stem-loop structures in stalled mRNA molecules, and effect endonucleolytic cleavage of the mRNA. May play a role in the release non-functional ribosomes and degradation of damaged mRNAs. Has endoribonuclease activity. This Methanococcus maripaludis (strain C5 / ATCC BAA-1333) protein is Protein pelota homolog.